Consider the following 570-residue polypeptide: Phosphoglucomutase 1 (570 aa).

N-acetylserine is present on serine 2. Positions 24 and 120 each coordinate alpha-D-glucose 1,6-bisphosphate. The active-site Phosphoserine intermediate is the serine 120. Mg(2+) is bound by residues serine 120, aspartate 291, aspartate 293, and aspartate 295. Serine 120 is modified (phosphoserine). Positions 295, 296, 360, 379, 381, and 392 each coordinate alpha-D-glucose 1,6-bisphosphate.

The protein belongs to the phosphohexose mutase family. As to quaternary structure, monomer. Mg(2+) serves as cofactor.

It localises to the cytoplasm. The catalysed reaction is alpha-D-glucose 1-phosphate = alpha-D-glucose 6-phosphate. It carries out the reaction O-phospho-L-seryl-[protein] + alpha-D-glucose 1-phosphate = alpha-D-glucose 1,6-bisphosphate + L-seryl-[protein]. It catalyses the reaction alpha-D-glucose 1,6-bisphosphate + L-seryl-[protein] = O-phospho-L-seryl-[protein] + alpha-D-glucose 6-phosphate. Its function is as follows. Minor phosphoglucomutase isozyme that catalyzes the reversible interconversion of alpha-D-glucose 1-phosphate and alpha-D-glucose 6-phosphate. The mechanism proceeds via the intermediate compound alpha-D-glucose 1,6-bisphosphate. Constitutes about 10-20% of the phosphoglucomutase activity in the cell. Key enzyme in hexose metabolism. The forward reaction is an essential step in the energy metabolism of galactose since the product of the galactose pathway enzymes in yeast is glucose 1-phosphate. The reverse reaction is an essential step for biosynthesis when carbon sources other than galactose are the energy source because glucose 1-phosphate is the starting point for the synthesis of UDP-glucose, which acts as a precursor for the synthesis of oligosaccharides and trehalose. The protein is Phosphoglucomutase 1 of Saccharomyces cerevisiae (strain ATCC 204508 / S288c) (Baker's yeast).